The primary structure comprises 149 residues: Lymphocyte antigen 6 complex locus protein G5c (149 aa).

A signal peptide spans 1–41; it reads MLFMAGPAASWSLRPLGLHGVPQALCAVLLTVLVMKTLVLG. The UPAR/Ly6 domain occupies 59–149; it reads LNCYRCLLET…NPDNRKNSMH (91 aa). Cystine bridges form between cysteine 61–cysteine 88, cysteine 64–cysteine 73, cysteine 80–cysteine 106, cysteine 115–cysteine 132, and cysteine 133–cysteine 138. The N-linked (GlcNAc...) asparagine glycan is linked to asparagine 95.

As to quaternary structure, forms oligomers. N-glycosylated. As to expression, detected in adult brain.

The protein resides in the secreted. Functionally, may have a role in hematopoietic cell differentiation. This Mus musculus (Mouse) protein is Lymphocyte antigen 6 complex locus protein G5c (Ly6g5c).